Reading from the N-terminus, the 512-residue chain is Kynurenine 3-monooxygenase (512 aa).

Belongs to the aromatic-ring hydroxylase family. KMO subfamily. Requires FAD as cofactor.

It localises to the mitochondrion outer membrane. The enzyme catalyses L-kynurenine + NADPH + O2 + H(+) = 3-hydroxy-L-kynurenine + NADP(+) + H2O. The protein operates within cofactor biosynthesis; NAD(+) biosynthesis; quinolinate from L-kynurenine: step 1/3. In terms of biological role, catalyzes the hydroxylation of L-kynurenine (L-Kyn) to form 3-hydroxy-L-kynurenine (L-3OHKyn). Required for synthesis of quinolinic acid. The protein is Kynurenine 3-monooxygenase (nic-3) of Neurospora crassa (strain ATCC 24698 / 74-OR23-1A / CBS 708.71 / DSM 1257 / FGSC 987).